A 480-amino-acid polypeptide reads, in one-letter code: Protein nucleotidyltransferase YdiU (480 aa).

ATP is bound by residues Gly-86, Gly-88, Arg-89, Lys-109, Asp-121, Gly-122, Arg-172, and Arg-179. Asp-248 serves as the catalytic Proton acceptor. Residues Asn-249 and Asp-258 each coordinate Mg(2+). ATP is bound at residue Asp-258.

The protein belongs to the SELO family. Mg(2+) is required as a cofactor. Mn(2+) serves as cofactor.

The catalysed reaction is L-seryl-[protein] + ATP = 3-O-(5'-adenylyl)-L-seryl-[protein] + diphosphate. The enzyme catalyses L-threonyl-[protein] + ATP = 3-O-(5'-adenylyl)-L-threonyl-[protein] + diphosphate. It catalyses the reaction L-tyrosyl-[protein] + ATP = O-(5'-adenylyl)-L-tyrosyl-[protein] + diphosphate. It carries out the reaction L-histidyl-[protein] + UTP = N(tele)-(5'-uridylyl)-L-histidyl-[protein] + diphosphate. The catalysed reaction is L-seryl-[protein] + UTP = O-(5'-uridylyl)-L-seryl-[protein] + diphosphate. The enzyme catalyses L-tyrosyl-[protein] + UTP = O-(5'-uridylyl)-L-tyrosyl-[protein] + diphosphate. Its function is as follows. Nucleotidyltransferase involved in the post-translational modification of proteins. It can catalyze the addition of adenosine monophosphate (AMP) or uridine monophosphate (UMP) to a protein, resulting in modifications known as AMPylation and UMPylation. In Salmonella arizonae (strain ATCC BAA-731 / CDC346-86 / RSK2980), this protein is Protein nucleotidyltransferase YdiU.